Consider the following 264-residue polypeptide: tRNA pseudouridine synthase A (264 aa).

D52 (nucleophile) is an active-site residue. Y110 is a substrate binding site.

The protein belongs to the tRNA pseudouridine synthase TruA family. In terms of assembly, homodimer.

The enzyme catalyses uridine(38/39/40) in tRNA = pseudouridine(38/39/40) in tRNA. Its function is as follows. Formation of pseudouridine at positions 38, 39 and 40 in the anticodon stem and loop of transfer RNAs. The chain is tRNA pseudouridine synthase A from Wigglesworthia glossinidia brevipalpis.